A 358-amino-acid chain; its full sequence is UDP-N-acetylglucosamine--N-acetylmuramyl-(pentapeptide) pyrophosphoryl-undecaprenol N-acetylglucosamine transferase (358 aa).

UDP-N-acetyl-alpha-D-glucosamine-binding positions include Thr12–Gly14, Asn124, Arg162, Ser185, Ile242, Ala261–Glu266, and Gln287.

It belongs to the glycosyltransferase 28 family. MurG subfamily.

It is found in the cell inner membrane. It carries out the reaction di-trans,octa-cis-undecaprenyl diphospho-N-acetyl-alpha-D-muramoyl-L-alanyl-D-glutamyl-meso-2,6-diaminopimeloyl-D-alanyl-D-alanine + UDP-N-acetyl-alpha-D-glucosamine = di-trans,octa-cis-undecaprenyl diphospho-[N-acetyl-alpha-D-glucosaminyl-(1-&gt;4)]-N-acetyl-alpha-D-muramoyl-L-alanyl-D-glutamyl-meso-2,6-diaminopimeloyl-D-alanyl-D-alanine + UDP + H(+). Its pathway is cell wall biogenesis; peptidoglycan biosynthesis. Its function is as follows. Cell wall formation. Catalyzes the transfer of a GlcNAc subunit on undecaprenyl-pyrophosphoryl-MurNAc-pentapeptide (lipid intermediate I) to form undecaprenyl-pyrophosphoryl-MurNAc-(pentapeptide)GlcNAc (lipid intermediate II). This Pseudoalteromonas translucida (strain TAC 125) protein is UDP-N-acetylglucosamine--N-acetylmuramyl-(pentapeptide) pyrophosphoryl-undecaprenol N-acetylglucosamine transferase.